Reading from the N-terminus, the 296-residue chain is Transcription factor Pur-alpha 1 (296 aa).

The residue at position 1 (Met1) is an N-acetylmethionine. Disordered stretches follow at residues 1 to 25 (MEAN…GGGG) and 186 to 214 (IPGH…EETG). A Phosphoserine modification is found at Ser207.

This sequence belongs to the PUR DNA-binding protein family. In terms of assembly, homodimer. Interacts with TCP20.

It is found in the nucleus. Its function is as follows. Transcription factor that specifically binds the purine-rich double-stranded telomeric repeated sequence 5'-AAACCCTAA-3' found in promoter telo boxes. The polypeptide is Transcription factor Pur-alpha 1 (PURA1) (Arabidopsis thaliana (Mouse-ear cress)).